The sequence spans 495 residues: Trigger factor (495 aa).

The 82-residue stretch at 162–243 folds into the PPIase FKBP-type domain; the sequence is DDFVSIDLSA…VKSLKERELP (82 aa). Basic and acidic residues predominate over residues 425 to 437; it reads DTDGNEIDPKEYF. Residues 425–495 are disordered; it reads DTDGNEIDPK…TDDDSENAEK (71 aa). Over residues 450–461 the composition is skewed to low complexity; it reads SADAEASENSEA. Residues 486 to 495 show a composition bias toward acidic residues; the sequence is TDDDSENAEK.

It belongs to the FKBP-type PPIase family. Tig subfamily.

It localises to the cytoplasm. The catalysed reaction is [protein]-peptidylproline (omega=180) = [protein]-peptidylproline (omega=0). Its function is as follows. Involved in protein export. Acts as a chaperone by maintaining the newly synthesized protein in an open conformation. Functions as a peptidyl-prolyl cis-trans isomerase. The polypeptide is Trigger factor (Corynebacterium kroppenstedtii (strain DSM 44385 / JCM 11950 / CIP 105744 / CCUG 35717)).